An 845-amino-acid polypeptide reads, in one-letter code: uncharacterized protein (845 aa).

Disordered stretches follow at residues 17–37 (RRKQ…NDQP) and 550–573 (AATE…NESL). Residues 622-707 (LSEQRFEREN…ELKKSNEHTR (86 aa)) adopt a coiled-coil conformation.

This is an uncharacterized protein from Saccharum officinarum (Sugarcane).